A 357-amino-acid chain; its full sequence is UDP-N-acetylglucosamine--N-acetylmuramyl-(pentapeptide) pyrophosphoryl-undecaprenol N-acetylglucosamine transferase (357 aa).

UDP-N-acetyl-alpha-D-glucosamine is bound by residues 12 to 14, Asn124, Arg163, Ser189, Ile243, 262 to 267, and Gln288; these read TGG and ALTVSE.

Belongs to the glycosyltransferase 28 family. MurG subfamily.

The protein localises to the cell inner membrane. The enzyme catalyses di-trans,octa-cis-undecaprenyl diphospho-N-acetyl-alpha-D-muramoyl-L-alanyl-D-glutamyl-meso-2,6-diaminopimeloyl-D-alanyl-D-alanine + UDP-N-acetyl-alpha-D-glucosamine = di-trans,octa-cis-undecaprenyl diphospho-[N-acetyl-alpha-D-glucosaminyl-(1-&gt;4)]-N-acetyl-alpha-D-muramoyl-L-alanyl-D-glutamyl-meso-2,6-diaminopimeloyl-D-alanyl-D-alanine + UDP + H(+). The protein operates within cell wall biogenesis; peptidoglycan biosynthesis. Cell wall formation. Catalyzes the transfer of a GlcNAc subunit on undecaprenyl-pyrophosphoryl-MurNAc-pentapeptide (lipid intermediate I) to form undecaprenyl-pyrophosphoryl-MurNAc-(pentapeptide)GlcNAc (lipid intermediate II). The sequence is that of UDP-N-acetylglucosamine--N-acetylmuramyl-(pentapeptide) pyrophosphoryl-undecaprenol N-acetylglucosamine transferase from Pseudomonas aeruginosa (strain LESB58).